Reading from the N-terminus, the 213-residue chain is Kynurenine formamidase (213 aa).

Trp18 serves as a coordination point for substrate. Zn(2+) is bound by residues His48, His52, and Asp54. Residue His58 is the Proton donor/acceptor of the active site. Zn(2+) contacts are provided by His160 and Glu172.

This sequence belongs to the Cyclase 1 superfamily. KynB family. In terms of assembly, homodimer. Zn(2+) serves as cofactor.

It carries out the reaction N-formyl-L-kynurenine + H2O = L-kynurenine + formate + H(+). The protein operates within amino-acid degradation; L-tryptophan degradation via kynurenine pathway; L-kynurenine from L-tryptophan: step 2/2. Functionally, catalyzes the hydrolysis of N-formyl-L-kynurenine to L-kynurenine, the second step in the kynurenine pathway of tryptophan degradation. This Burkholderia thailandensis (strain ATCC 700388 / DSM 13276 / CCUG 48851 / CIP 106301 / E264) protein is Kynurenine formamidase.